The primary structure comprises 229 residues: Ribonuclease HII (229 aa).

The RNase H type-2 domain maps to 42-229; that stretch reads TRIAGVDEVG…KPVHKILYQE (188 aa). Residues Asp48, Glu49, and Asp139 each contribute to the a divalent metal cation site.

This sequence belongs to the RNase HII family. The cofactor is Mn(2+). Mg(2+) serves as cofactor.

The protein resides in the cytoplasm. It carries out the reaction Endonucleolytic cleavage to 5'-phosphomonoester.. Functionally, endonuclease that specifically degrades the RNA of RNA-DNA hybrids. The protein is Ribonuclease HII of Ruegeria sp. (strain TM1040) (Silicibacter sp.).